The following is a 262-amino-acid chain: Cutinase 1 (262 aa).

Tyr61 is a poly(ethylene terephthalate) binding site. Ser131 (nucleophile) is an active-site residue. 2 residues coordinate poly(ethylene terephthalate): Met132 and Trp156. Residues Asp177 and His209 each act as charge relay system in the active site. Cys242 and Cys260 are oxidised to a cystine.

This sequence belongs to the AB hydrolase superfamily.

The protein resides in the secreted. The protein localises to the periplasm. The enzyme catalyses (ethylene terephthalate)(n) + H2O = (ethylene terephthalate)(n-1) + 4-[(2-hydroxyethoxy)carbonyl]benzoate + H(+). The catalysed reaction is a butanoate ester + H2O = an aliphatic alcohol + butanoate + H(+). It catalyses the reaction an acetyl ester + H2O = an aliphatic alcohol + acetate + H(+). It carries out the reaction cutin + H2O = cutin monomers.. Functionally, catalyzes the hydrolysis of cutin, a polyester that forms the structure of plant cuticle. Shows esterase activity towards p-nitrophenol-linked aliphatic esters (pNP-aliphatic esters). Capable of degrading the plastic poly(ethylene terephthalate) (PET), the most abundant polyester plastic in the world. Capable of degrading the bioplastic poly(lactic acid) (PLLA). This chain is Cutinase 1, found in Thermobifida cellulosilytica.